Consider the following 636-residue polypeptide: 1-deoxy-D-xylulose-5-phosphate synthase (636 aa).

Residues His-72 and 113-115 (GHA) each bind thiamine diphosphate. Asp-144 is a binding site for Mg(2+). Thiamine diphosphate is bound by residues 145-146 (GA), Asn-174, Tyr-287, and Glu-370. Asn-174 provides a ligand contact to Mg(2+).

The protein belongs to the transketolase family. DXPS subfamily. Homodimer. The cofactor is Mg(2+). Thiamine diphosphate is required as a cofactor.

The catalysed reaction is D-glyceraldehyde 3-phosphate + pyruvate + H(+) = 1-deoxy-D-xylulose 5-phosphate + CO2. It participates in metabolic intermediate biosynthesis; 1-deoxy-D-xylulose 5-phosphate biosynthesis; 1-deoxy-D-xylulose 5-phosphate from D-glyceraldehyde 3-phosphate and pyruvate: step 1/1. Functionally, catalyzes the acyloin condensation reaction between C atoms 2 and 3 of pyruvate and glyceraldehyde 3-phosphate to yield 1-deoxy-D-xylulose-5-phosphate (DXP). The polypeptide is 1-deoxy-D-xylulose-5-phosphate synthase (Microcystis aeruginosa (strain NIES-843 / IAM M-2473)).